Here is an 849-residue protein sequence, read N- to C-terminus: Rho guanine nucleotide exchange factor 15 (849 aa).

Disordered stretches follow at residues 1-146 (MSAQ…ASAP), 159-202 (GAEG…NGTP), and 277-308 (LPPL…LPSE). Residues 18–31 (RIIRPRPPSRHRAP) are compositionally biased toward basic residues. Residues 48-59 (QISNDASASVCT) show a composition bias toward polar residues. The segment covering 65-110 (PPTASLKPPALLPPSVSRTSLDSQTSPDSPSSTPSPSPVSRRSISP) has biased composition (low complexity). Phosphoserine is present on residues Ser-107 and Ser-109. Over residues 111–123 (EPAPCSPVPPPKP) the composition is skewed to pro residues. Polar residues predominate over residues 164-180 (AQSSDSLERCSQGSTEV). Position 361 is a phosphotyrosine; by EPHB2 (Tyr-361). One can recognise a DH domain in the interval 425-609 (RMQESLFEVV…SKIIERCSAE (185 aa)). 2 stretches are compositionally biased toward polar residues: residues 771-786 (CSEP…QSLE) and 840-849 (SSGTPDTPQP). 2 disordered regions span residues 771–803 (CSEP…GWLK) and 819–849 (GEHE…TPQP).

In terms of assembly, interacts with EPHA4. Interacts with EPHB2. Phosphorylated on tyrosine residues upon EFNA1 stimulation. EPHB2-dependent phosphorylation at Tyr-361 triggers UBE3A-mediated ubiquitination. In terms of processing, ubiquitinated; UBE3A-mediated ubiquitination and degradation by the proteasome promotes EFNB1-dependent synapse formation. As to expression, at P12, expressed is detected in the CA1 region and the dentate gyrus of the hippocampus.

The protein localises to the cell projection. Its subcellular location is the dendrite. Specific GEF for RhoA activation. Does not activate RAC1 or CDC42. Regulates vascular smooth muscle contractility. Negatively regulates excitatory synapse development by suppressing the synapse-promoting activity of EPHB2. The sequence is that of Rho guanine nucleotide exchange factor 15 (Arhgef15) from Mus musculus (Mouse).